The primary structure comprises 316 residues: Ribosomal RNA large subunit methyltransferase F (316 aa).

This sequence belongs to the methyltransferase superfamily. METTL16/RlmF family.

It localises to the cytoplasm. It carries out the reaction adenosine(1618) in 23S rRNA + S-adenosyl-L-methionine = N(6)-methyladenosine(1618) in 23S rRNA + S-adenosyl-L-homocysteine + H(+). In terms of biological role, specifically methylates the adenine in position 1618 of 23S rRNA. This chain is Ribosomal RNA large subunit methyltransferase F, found in Pseudomonas putida (strain GB-1).